The following is a 155-amino-acid chain: MPRMIEGTLSAEGKRFGIIVARFNDFISDRLLGGALDALMRSGAADENIEVAKVPGAFEIPLIADKMAKSGKYDALICLGAVIRGSTPHFDYVCAEASKGIAHVSLGAGIPVMFGILTTDTIEQAIERAGTKAGNKGWDVAMGAIEMVNLAEQFK.

Residues Phe23, 57–59 (AFE), and 81–83 (AVI) each bind 5-amino-6-(D-ribitylamino)uracil. 86 to 87 (ST) contacts (2S)-2-hydroxy-3-oxobutyl phosphate. The active-site Proton donor is His89. A 5-amino-6-(D-ribitylamino)uracil-binding site is contributed by Phe114. Residue Arg128 coordinates (2S)-2-hydroxy-3-oxobutyl phosphate.

The protein belongs to the DMRL synthase family.

It catalyses the reaction (2S)-2-hydroxy-3-oxobutyl phosphate + 5-amino-6-(D-ribitylamino)uracil = 6,7-dimethyl-8-(1-D-ribityl)lumazine + phosphate + 2 H2O + H(+). It participates in cofactor biosynthesis; riboflavin biosynthesis; riboflavin from 2-hydroxy-3-oxobutyl phosphate and 5-amino-6-(D-ribitylamino)uracil: step 1/2. Its function is as follows. Catalyzes the formation of 6,7-dimethyl-8-ribityllumazine by condensation of 5-amino-6-(D-ribitylamino)uracil with 3,4-dihydroxy-2-butanone 4-phosphate. This is the penultimate step in the biosynthesis of riboflavin. This chain is 6,7-dimethyl-8-ribityllumazine synthase, found in Desulfatibacillum aliphaticivorans.